Here is a 280-residue protein sequence, read N- to C-terminus: Pantothenate synthetase (280 aa).

26-33 (MGNLHEGH) contacts ATP. His33 acts as the Proton donor in catalysis. Residue Gln57 coordinates (R)-pantoate. Beta-alanine is bound at residue Gln57. Residue 145 to 148 (GKKD) participates in ATP binding. Residue Gln151 participates in (R)-pantoate binding. Residues Val174 and 182–185 (LSSR) each bind ATP.

The protein belongs to the pantothenate synthetase family. As to quaternary structure, homodimer.

It is found in the cytoplasm. It catalyses the reaction (R)-pantoate + beta-alanine + ATP = (R)-pantothenate + AMP + diphosphate + H(+). It functions in the pathway cofactor biosynthesis; (R)-pantothenate biosynthesis; (R)-pantothenate from (R)-pantoate and beta-alanine: step 1/1. Catalyzes the condensation of pantoate with beta-alanine in an ATP-dependent reaction via a pantoyl-adenylate intermediate. The sequence is that of Pantothenate synthetase from Bordetella bronchiseptica (strain ATCC BAA-588 / NCTC 13252 / RB50) (Alcaligenes bronchisepticus).